Consider the following 343-residue polypeptide: Holliday junction branch migration complex subunit RuvB (343 aa).

The segment at 1 to 178 (MNFVQQNREG…FGMILELQFY (178 aa)) is large ATPase domain (RuvB-L). Residues Leu-17, Arg-18, Gly-59, Lys-62, Thr-63, Thr-64, 125–127 (EDY), Arg-168, Tyr-178, and Arg-215 contribute to the ATP site. Thr-63 contributes to the Mg(2+) binding site. The tract at residues 179–249 (TVKELMEIIK…LVEKTMDILE (71 aa)) is small ATPAse domain (RuvB-S). Positions 252 to 343 (KLGLDEMDRK…DESLRKSDES (92 aa)) are head domain (RuvB-H). DNA contacts are provided by Arg-307 and Arg-312.

It belongs to the RuvB family. In terms of assembly, homohexamer. Forms an RuvA(8)-RuvB(12)-Holliday junction (HJ) complex. HJ DNA is sandwiched between 2 RuvA tetramers; dsDNA enters through RuvA and exits via RuvB. An RuvB hexamer assembles on each DNA strand where it exits the tetramer. Each RuvB hexamer is contacted by two RuvA subunits (via domain III) on 2 adjacent RuvB subunits; this complex drives branch migration. In the full resolvosome a probable DNA-RuvA(4)-RuvB(12)-RuvC(2) complex forms which resolves the HJ.

The protein resides in the cytoplasm. The catalysed reaction is ATP + H2O = ADP + phosphate + H(+). Its function is as follows. The RuvA-RuvB-RuvC complex processes Holliday junction (HJ) DNA during genetic recombination and DNA repair, while the RuvA-RuvB complex plays an important role in the rescue of blocked DNA replication forks via replication fork reversal (RFR). RuvA specifically binds to HJ cruciform DNA, conferring on it an open structure. The RuvB hexamer acts as an ATP-dependent pump, pulling dsDNA into and through the RuvAB complex. RuvB forms 2 homohexamers on either side of HJ DNA bound by 1 or 2 RuvA tetramers; 4 subunits per hexamer contact DNA at a time. Coordinated motions by a converter formed by DNA-disengaged RuvB subunits stimulates ATP hydrolysis and nucleotide exchange. Immobilization of the converter enables RuvB to convert the ATP-contained energy into a lever motion, pulling 2 nucleotides of DNA out of the RuvA tetramer per ATP hydrolyzed, thus driving DNA branch migration. The RuvB motors rotate together with the DNA substrate, which together with the progressing nucleotide cycle form the mechanistic basis for DNA recombination by continuous HJ branch migration. Branch migration allows RuvC to scan DNA until it finds its consensus sequence, where it cleaves and resolves cruciform DNA. The polypeptide is Holliday junction branch migration complex subunit RuvB (Pseudothermotoga lettingae (strain ATCC BAA-301 / DSM 14385 / NBRC 107922 / TMO) (Thermotoga lettingae)).